We begin with the raw amino-acid sequence, 404 residues long: Phosphopentomutase (404 aa).

Mn(2+) contacts are provided by Asp10, Asp303, His308, Asp344, His345, and His356.

The protein belongs to the phosphopentomutase family. The cofactor is Mn(2+).

It localises to the cytoplasm. It catalyses the reaction 2-deoxy-alpha-D-ribose 1-phosphate = 2-deoxy-D-ribose 5-phosphate. The catalysed reaction is alpha-D-ribose 1-phosphate = D-ribose 5-phosphate. It functions in the pathway carbohydrate degradation; 2-deoxy-D-ribose 1-phosphate degradation; D-glyceraldehyde 3-phosphate and acetaldehyde from 2-deoxy-alpha-D-ribose 1-phosphate: step 1/2. Isomerase that catalyzes the conversion of deoxy-ribose 1-phosphate (dRib-1-P) and ribose 1-phosphate (Rib-1-P) to deoxy-ribose 5-phosphate (dRib-5-P) and ribose 5-phosphate (Rib-5-P), respectively. This Shewanella oneidensis (strain ATCC 700550 / JCM 31522 / CIP 106686 / LMG 19005 / NCIMB 14063 / MR-1) protein is Phosphopentomutase.